Reading from the N-terminus, the 516-residue chain is uncharacterized protein (516 aa).

PFTB repeat units lie at residues 45-86 (RQDA…QRAD) and 401-443 (DERA…DGSE).

This is an uncharacterized protein from Bradyrhizobium diazoefficiens (strain JCM 10833 / BCRC 13528 / IAM 13628 / NBRC 14792 / USDA 110).